The chain runs to 140 residues: Myelodysplastic syndrome 2 translocation-associated protein (140 aa).

In terms of tissue distribution, highly expressed in peripheral blood leukocytes, spleen, thymus, kidney, pancreas and lung.

The chain is Myelodysplastic syndrome 2 translocation-associated protein (MDS2) from Homo sapiens (Human).